A 374-amino-acid polypeptide reads, in one-letter code: Queuine tRNA-ribosyltransferase (374 aa).

Asp-90 functions as the Proton acceptor in the catalytic mechanism. Substrate is bound by residues 90-94 (DSGGF), Asp-144, Gln-193, and Gly-220. The RNA binding stretch occupies residues 251–257 (GVGTPED). Asp-270 (nucleophile) is an active-site residue. The tract at residues 275 to 279 (TRNAR) is RNA binding; important for wobble base 34 recognition. 4 residues coordinate Zn(2+): Cys-308, Cys-310, Cys-313, and His-339.

It belongs to the queuine tRNA-ribosyltransferase family. As to quaternary structure, homodimer. Within each dimer, one monomer is responsible for RNA recognition and catalysis, while the other monomer binds to the replacement base PreQ1. The cofactor is Zn(2+).

It catalyses the reaction 7-aminomethyl-7-carbaguanine + guanosine(34) in tRNA = 7-aminomethyl-7-carbaguanosine(34) in tRNA + guanine. It participates in tRNA modification; tRNA-queuosine biosynthesis. In terms of biological role, catalyzes the base-exchange of a guanine (G) residue with the queuine precursor 7-aminomethyl-7-deazaguanine (PreQ1) at position 34 (anticodon wobble position) in tRNAs with GU(N) anticodons (tRNA-Asp, -Asn, -His and -Tyr). Catalysis occurs through a double-displacement mechanism. The nucleophile active site attacks the C1' of nucleotide 34 to detach the guanine base from the RNA, forming a covalent enzyme-RNA intermediate. The proton acceptor active site deprotonates the incoming PreQ1, allowing a nucleophilic attack on the C1' of the ribose to form the product. After dissociation, two additional enzymatic reactions on the tRNA convert PreQ1 to queuine (Q), resulting in the hypermodified nucleoside queuosine (7-(((4,5-cis-dihydroxy-2-cyclopenten-1-yl)amino)methyl)-7-deazaguanosine). The polypeptide is Queuine tRNA-ribosyltransferase (Campylobacter fetus subsp. fetus (strain 82-40)).